The sequence spans 688 residues: Glycine--tRNA ligase beta subunit (688 aa).

The protein belongs to the class-II aminoacyl-tRNA synthetase family. Tetramer of two alpha and two beta subunits.

It is found in the cytoplasm. The catalysed reaction is tRNA(Gly) + glycine + ATP = glycyl-tRNA(Gly) + AMP + diphosphate. The sequence is that of Glycine--tRNA ligase beta subunit from Clostridioides difficile (strain 630) (Peptoclostridium difficile).